Consider the following 253-residue polypeptide: Isoprenyl transferase (253 aa).

Asp-30 is a catalytic residue. Residue Asp-30 participates in Mg(2+) binding. Substrate contacts are provided by residues Gly-31–Arg-34, Trp-35, His-51, and Ser-79–Glu-81. Asn-82 functions as the Proton acceptor in the catalytic mechanism. Residues Phe-83, Arg-85, Arg-202, and Arg-208 to Ser-210 each bind substrate. Glu-221 is a Mg(2+) binding site.

Belongs to the UPP synthase family. In terms of assembly, homodimer. Requires Mg(2+) as cofactor.

Catalyzes the condensation of isopentenyl diphosphate (IPP) with allylic pyrophosphates generating different type of terpenoids. This is Isoprenyl transferase from Chlamydia trachomatis serovar D (strain ATCC VR-885 / DSM 19411 / UW-3/Cx).